The chain runs to 93 residues: Large ribosomal subunit protein bL36m (93 aa).

Residues 1–35 (MFLQTLRLTMPRMFLHMKPSPITITRACTVPSLLS) constitute a mitochondrion transit peptide.

It belongs to the bacterial ribosomal protein bL36 family. As to quaternary structure, component of the mitochondrial large ribosomal subunit (mt-LSU). Mature yeast 74S mitochondrial ribosomes consist of a small (37S) and a large (54S) subunit. The 37S small subunit contains a 15S ribosomal RNA (15S mt-rRNA) and 34 different proteins. The 54S large subunit contains a 21S rRNA (21S mt-rRNA) and 46 different proteins. bL36m has a zinc binding site.

It is found in the mitochondrion. In terms of biological role, component of the mitochondrial ribosome (mitoribosome), a dedicated translation machinery responsible for the synthesis of mitochondrial genome-encoded proteins, including at least some of the essential transmembrane subunits of the mitochondrial respiratory chain. The mitoribosomes are attached to the mitochondrial inner membrane and translation products are cotranslationally integrated into the membrane. bL36m may be involved in a process influencing telomere capping. In Saccharomyces cerevisiae (strain ATCC 204508 / S288c) (Baker's yeast), this protein is Large ribosomal subunit protein bL36m (RTC6).